Consider the following 558-residue polypeptide: Atlastin-1 (558 aa).

Residues 1–28 (MAKSRRDRNSWGGFSEKSSDWSSEEEEP) are disordered. Positions 1–34 (MAKSRRDRNSWGGFSEKSSDWSSEEEEPVRKAGP) are N-terminal hypervariable region (HVR). The Cytoplasmic portion of the chain corresponds to 1–449 (MAKSRRDRNS…NIFHAARTPA (449 aa)). S10, S22, and S23 each carry phosphoserine. Residues 64–309 (DKEVVAVSVA…LIPWLLSPER (246 aa)) form the GB1/RHD3-type G domain. GDP contacts are provided by R77, K78, G79, K80, S81, F82, Q148, R217, D218, V276, and N279. Residues R77, K78, G79, K80, S81, and F82 each contribute to the GTP site. S81 is a binding site for Mg(2+). GTP is bound by residues R217, D218, and V276. Residues 347–438 (MLQATAEANN…YIQYIKHNDS (92 aa)) are 3HB (three-helix bundle) domain. The residue at position 395 (K395) is an N6-acetyllysine. The stretch at 412–439 (EFSRRYLQQLESEIDELYIQYIKHNDSK) forms a coiled coil. Residues 439–447 (KNIFHAART) form a linker region. A helical transmembrane segment spans residues 450 to 470 (TLFVVIFITYVIAGVTGFIGL). Position 471 (D471) is a topological domain, lumenal. Residues 472–492 (IIASLCNMIMGLTLITLCTWA) form a helical membrane-spanning segment. Residues 493-558 (YIRYSGEYRE…PTQQPEKKKI (66 aa)) lie on the Cytoplasmic side of the membrane. The interval 521-558 (NEALYKLYSAAATHRHLCHQAFPAPKSEPTQQPEKKKI) is autoinhibitory domain.

This sequence belongs to the TRAFAC class dynamin-like GTPase superfamily. GB1/RHD3 GTPase family. GB1 subfamily. As to quaternary structure, monomeric and homodimeric. The homodimer, transiently formed by two molecules on opposing membranes, is the active form mediating ER membrane fusion. Interacts with REEP1, REEP5, RTN3 and RTN4 (via the transmembrane region); these proteins are involved in endoplasmic reticulum tubular network organization. Interacts with ZFYVE27; both proteins are involved in endoplasmic reticulum tubular network organization. Interacts with ARL6IP1; both proteins are involved in endoplasmic reticulum tubular network organization. Interacts with SPAST; the interaction is direct, could recruit SPAST to Golgi membranes. Interacts (via N-terminal region) with MAP4K4 (via CNH regulatory domain). May interact with TMED2. Interacts with CPT1C. Phosphorylated. Phosphorylation, by different kinases, of the N-terminal hypervariable region (HVR) regulates the ATL1-mediated membrane tethering step.

The protein localises to the endoplasmic reticulum membrane. The protein resides in the golgi apparatus membrane. It localises to the cell projection. Its subcellular location is the axon. It carries out the reaction GTP + H2O = GDP + phosphate + H(+). Atlastin-1 (ATL1) is a membrane-anchored GTPase that mediates the GTP-dependent fusion of endoplasmic reticulum (ER) membranes, maintaining the continuous ER network. It facilitates the formation of three-way junctions where ER tubules intersect. Two atlastin-1 on neighboring ER tubules bind GTP and form loose homodimers through the GB1/RHD3-type G domains and 3HB regions. Upon GTP hydrolysis, the 3HB regions tighten, pulling the membranes together to drive their fusion. After fusion, the homodimer disassembles upon release of inorganic phosphate (Pi). Subsequently, GDP dissociates, resetting the monomers to a conformation ready for a new fusion cycle. May also regulate more or less directly Golgi biogenesis. Indirectly regulates axonal development. The chain is Atlastin-1 from Mus musculus (Mouse).